Reading from the N-terminus, the 138-residue chain is Nucleoside diphosphate kinase (138 aa).

ATP contacts are provided by lysine 9, phenylalanine 57, arginine 85, threonine 91, arginine 102, and asparagine 112. The active-site Pros-phosphohistidine intermediate is histidine 120.

The protein belongs to the NDK family. As to quaternary structure, homotetramer. The cofactor is Mg(2+).

The protein resides in the cytoplasm. It catalyses the reaction a 2'-deoxyribonucleoside 5'-diphosphate + ATP = a 2'-deoxyribonucleoside 5'-triphosphate + ADP. It carries out the reaction a ribonucleoside 5'-diphosphate + ATP = a ribonucleoside 5'-triphosphate + ADP. In terms of biological role, major role in the synthesis of nucleoside triphosphates other than ATP. The ATP gamma phosphate is transferred to the NDP beta phosphate via a ping-pong mechanism, using a phosphorylated active-site intermediate. The chain is Nucleoside diphosphate kinase from Streptococcus agalactiae serotype V (strain ATCC BAA-611 / 2603 V/R).